The following is a 151-amino-acid chain: Monooxygenase nsrQ (151 aa).

Belongs to the avfA family.

It functions in the pathway secondary metabolite biosynthesis. In terms of biological role, monooxygenase; part of the gene cluster that mediates the biosynthesis of the tetrahydroxanthone dimer neosartorin, which exhibits antibacterial activity. The two different monomeric units appear to be synthesized by the same set of enzymes, among which the Baeyer-Villiger monooxygenase nsrF is the key enzyme for the divergence of the biosynthetic routes. The pathway begins with the synthesis of atrochrysone thioester by the polyketide synthase nsrB. The atrochrysone carboxyl ACP thioesterase nsrC then breaks the thioester bond and releases the atrochrysone carboxylic acid from AacuL. Atrochrysone carboxylic acid is decarboxylated by the decarboxylase nsrE, and oxidized by the anthrone oxygenase nsrD to yield emodin. Emodin is then reduced to emodin hydroquinone by the oxidoreductase nsrR. A-ring reduction by the short chain dehydrogenase nsrJ, dehydration by the scytalone dehydratase-like protein nsrI and probable spontaneous re-oxidation, results in overall deoxygenation to chrysophanol. The Baeyer-Villiger monooxygenase nsrF accepts chrysophanol as a substrate to insert one oxygen atom at two different positions to yield the precursors of both monomric units. NsrF is promiscuous/flexible in interacting with the 2 (non methylated and methylated) aromatic rings of chrysophanol, thus diverging the biosynthetic pathway at this point. After the hydrolysis of the lactones, methylesterification by the methyltransferase nsrG yields respectively moniliphenone and 2,2',6'-trihydroxy-4-methyl-6-methoxya-cyldiphenylmethanone. The next steps are the hydroxylation by the FAD-dependent monooxygenase nsrK, followed by isomerization by the monooxygenase nsrQ. The short chain dehydrogenase/reductase nsrO then catalyzes the C-5 ketoreduction to give the xanthone skeleton of blennolide C and 5-acetylblennolide A. The acetyltransferase nsrL has a strict substrate specificity and uses only blennolide A but not blennolide C to yield 5-acetylblennolide A as the single-acetylated product. In the final step of the biosynthesis, the heterodimerization of the 2 xanthones, blennolide C and 5-acetylblennolide A, is catalyzed by the cytochrome P450 monooxygenase nsrP. NsrP can utilize at least three different xanthones as its substrates to perform the dimerization reaction. This is Monooxygenase nsrQ from Aspergillus novofumigatus (strain IBT 16806).